We begin with the raw amino-acid sequence, 735 residues long: MIP-related peptides (735 aa).

The signal sequence occupies residues M1 to S20. Residues F21–R135 constitute a propeptide that is removed on maturation. A compositionally biased stretch (low complexity) spans A33–Q65. Disordered regions lie at residues A33 to K212 and F229 to S251. 2 stretches are compositionally biased toward polar residues: residues H66–A76 and P101–P125. Phenylalanine amide is present on residues F142, F153, and F164. The segment covering F142 to M159 has biased composition (basic residues). Positions S168–R184 are excised as a propeptide. F190 is modified (phenylalanine amide). The propeptide occupies S194–R203. The span at S194–G204 shows a compositional bias: basic and acidic residues. Phenylalanine amide is present on residues F209 and F229. Positions F214–F229 are cleaved as a propeptide — linker peptide. Residues S233 to R249 constitute a propeptide that is removed on maturation. F255 is modified (phenylalanine amide). A propeptide spans Q259–A267 (linker peptide). Position 274 is a phenylalanine amide (F274). A propeptide spans S279 to L287 (linker peptide). Phenylalanine amide is present on F294. The propeptide occupies Q298–R311. At F317 the chain carries Phenylalanine amide. A propeptide spanning residues R321–R332 is cleaved from the precursor. F338 carries the phenylalanine amide modification. A propeptide spanning residues R342 to R353 is cleaved from the precursor. Disordered stretches follow at residues L352 to G373 and R381 to A400. F359 bears the Phenylalanine amide mark. Residues R363–R377 constitute a propeptide that is removed on maturation. F383 bears the Phenylalanine amide mark. A propeptide spanning residues R387 to R401 is cleaved from the precursor. F407 carries the post-translational modification Phenylalanine amide. Positions S412–T426 are cleaved as a propeptide — linker peptide. Positions P430–P464 are disordered. The residue at position 433 (F433) is a Phenylalanine amide. The propeptide occupies R437–R461. The span at S438–S447 shows a compositional bias: basic and acidic residues. Q462 is subject to Pyrrolidone carboxylic acid. F467 bears the Phenylalanine amide mark. Positions Y471–R493 are excised as a propeptide. Residue Q494 is modified to Pyrrolidone carboxylic acid. Position 499 is a phenylalanine amide (F499). The propeptide occupies E503–R509. Residue I515 is modified to Isoleucine amide. Positions F519 to R546 are excised as a propeptide. M552 carries the post-translational modification Methionine amide. Positions T556–K585 are excised as a propeptide. V592 bears the Valine amide mark. A Leucine amide modification is found at L601. I610 carries the post-translational modification Isoleucine amide. V619 carries the post-translational modification Valine amide. Residue I628 is modified to Isoleucine amide. Positions D632–V661 are cleaved as a propeptide — linker peptide. Q664 bears the Pyrrolidone carboxylic acid mark. I669 is modified (isoleucine amide). Residues G674–E705 constitute a propeptide, linker peptide. V714 carries the post-translational modification Valine amide. Residues G715 to R735 constitute a propeptide that is removed on maturation.

In terms of tissue distribution, expressed in the CNS and peripheral tissues (the digestive tract, vasculature, and the reproductive organs).

The protein resides in the secreted. In terms of biological role, has some structural and functional features similar to vertebrate opioid peptides. AMRPs are inhibitory on Aplysia esophagus, penis retractor muscle, and body wall muscle. The protein is MIP-related peptides (MRP) of Aplysia californica (California sea hare).